The chain runs to 165 residues: LIM domain transcription factor LMO4 (165 aa).

LIM zinc-binding domains follow at residues 23–83 (CAGC…LFGN) and 87–147 (CSAC…ALIN).

Interacts strongly with LDBS. Interacts with LDB2 and LDB1. Interaction with complexes consisting of at least LDB1 and LHX3 acts to disassemble the complex; may preferentially disassemble LDB1-LHX3 complexes rather than complexes consisting of LDB1, LHX3 and ISL1. Interacts (via the LIM zinc-binding domain 1) with RBBP8. Interacts with both RPPB8 and LDB1 through the same face and cannot bind to both proteins simultaneously. Interacts with BRCA1 (via the BRCT domains); the interaction represses BRCA1 transcriptional activity. Interacts with DEAF1; LMO4 blocks export from nucleus.

Transcription cofactor. Plays a role in establishing motor neuron identity, in concert with MNX1, acting, at least in part, to disrupt LDB1-LHX3 complexes thereby negatively modulating interneuron genes in motor neurons. The polypeptide is LIM domain transcription factor LMO4 (LMO4) (Bos taurus (Bovine)).